We begin with the raw amino-acid sequence, 501 residues long: Lysine--tRNA ligase (501 aa).

Residues Glu412 and Glu419 each coordinate Mg(2+).

It belongs to the class-II aminoacyl-tRNA synthetase family. In terms of assembly, homodimer. Mg(2+) serves as cofactor.

The protein localises to the cytoplasm. It catalyses the reaction tRNA(Lys) + L-lysine + ATP = L-lysyl-tRNA(Lys) + AMP + diphosphate. In Chlorobium luteolum (strain DSM 273 / BCRC 81028 / 2530) (Pelodictyon luteolum), this protein is Lysine--tRNA ligase.